The sequence spans 134 residues: Small ribosomal subunit protein uS11 (134 aa).

2 disordered regions span residues 1 to 24 (MPPK…VAHG) and 115 to 134 (IQDV…RRRV). The segment covering 9–18 (AVKKVRRKEK) has biased composition (basic residues).

This sequence belongs to the universal ribosomal protein uS11 family. As to quaternary structure, part of the 30S ribosomal subunit. Interacts with proteins S7 and S18. Binds to IF-3.

Functionally, located on the platform of the 30S subunit, it bridges several disparate RNA helices of the 16S rRNA. Forms part of the Shine-Dalgarno cleft in the 70S ribosome. The sequence is that of Small ribosomal subunit protein uS11 from Saccharopolyspora erythraea (strain ATCC 11635 / DSM 40517 / JCM 4748 / NBRC 13426 / NCIMB 8594 / NRRL 2338).